Reading from the N-terminus, the 404-residue chain is MTKEKIVLAYSGGLDTSVAIQWLVESGYEVIACCLDVGEGKNLDFIKEKAITVGASASYTIDAKEEFAENFALIALQAHAYYEGKYPLISALSRPLIAKKLVEVARQEGASAIAHGCTGKGNDQVRFEVAIHALAPDLKVVSPVRDWKWSREEEINYAKEHNIPVPIDLDNPFSIDQNLWGRSNECGVLENPWTTPPEAAYDLTVSLEDAPDTADIVEITFDAGIPISLNGENMSLANLILTLNEIAGKHGVGRIDHIENRLVGIKSREVYECPAAVTLITAHKELEDLTFVREVAHFKPIIEQKISETIYNGLWFSPLTEALIAFLKSTQKFVNGTIRVKLFKGHAIVEGRKSPNSLYDENLATYTSSDTFDQDAAVGFIKLFGLPTKVSAEVNSKVTITTEV.

9–17 contributes to the ATP binding site; it reads AYSGGLDTS. Tyr-86 contributes to the L-citrulline binding site. Gly-116 contributes to the ATP binding site. 3 residues coordinate L-aspartate: Thr-118, Asn-122, and Asp-123. Asn-122 contacts L-citrulline. L-citrulline is bound by residues Arg-126, Ser-174, Ser-183, Glu-259, and Tyr-271.

Belongs to the argininosuccinate synthase family. Type 1 subfamily. In terms of assembly, homotetramer.

It localises to the cytoplasm. The catalysed reaction is L-citrulline + L-aspartate + ATP = 2-(N(omega)-L-arginino)succinate + AMP + diphosphate + H(+). It participates in amino-acid biosynthesis; L-arginine biosynthesis; L-arginine from L-ornithine and carbamoyl phosphate: step 2/3. The polypeptide is Argininosuccinate synthase (Listeria innocua serovar 6a (strain ATCC BAA-680 / CLIP 11262)).